Consider the following 706-residue polypeptide: Polyribonucleotide nucleotidyltransferase (706 aa).

2 residues coordinate Mg(2+): aspartate 488 and aspartate 494. Positions 555–614 constitute a KH domain; the sequence is PRLFTMKINPDKIRDVIGKGGSVIRALTEETGTQINIDEDGTITIASADPAKAEEAKRRI. Positions 624-692 constitute an S1 motif domain; sequence GKIYEGPITK…EKGRIKLSMK (69 aa).

The protein belongs to the polyribonucleotide nucleotidyltransferase family. Requires Mg(2+) as cofactor.

The protein localises to the cytoplasm. It carries out the reaction RNA(n+1) + phosphate = RNA(n) + a ribonucleoside 5'-diphosphate. Involved in mRNA degradation. Catalyzes the phosphorolysis of single-stranded polyribonucleotides processively in the 3'- to 5'-direction. This Albidiferax ferrireducens (strain ATCC BAA-621 / DSM 15236 / T118) (Rhodoferax ferrireducens) protein is Polyribonucleotide nucleotidyltransferase.